Reading from the N-terminus, the 185-residue chain is Ribosome-recycling factor (185 aa).

The protein belongs to the RRF family.

It is found in the cytoplasm. Its function is as follows. Responsible for the release of ribosomes from messenger RNA at the termination of protein biosynthesis. May increase the efficiency of translation by recycling ribosomes from one round of translation to another. The protein is Ribosome-recycling factor of Campylobacter fetus subsp. fetus (strain 82-40).